The sequence spans 263 residues: Probable adenylate kinase 7, mitochondrial (263 aa).

The transit peptide at 1–30 directs the protein to the mitochondrion; the sequence is MAWLSRVRGVSPVTRLAAIRRSFGSAAALE. 72–77 contacts ATP; the sequence is GAWRHV. Residues 92-121 form an NMP region; it reads SMGSLVRQELNPRSSLYKEIASAVNERKLV. AMP-binding positions include Arg-98, 119 to 121, 149 to 152, Gln-156, and Arg-206; these read KLV and GIPR. Position 234 (Gly-234) interacts with ATP.

This sequence belongs to the adenylate kinase family. In terms of assembly, monomer.

It is found in the mitochondrion. It carries out the reaction AMP + ATP = 2 ADP. In terms of biological role, catalyzes the reversible transfer of the terminal phosphate group between ATP and AMP. Plays an important role in cellular energy homeostasis and in adenine nucleotide metabolism. This is Probable adenylate kinase 7, mitochondrial from Arabidopsis thaliana (Mouse-ear cress).